A 177-amino-acid polypeptide reads, in one-letter code: Prorelaxin (177 aa).

A signal peptide spans 1 to 22 (MSCKFVLQLLGFWLLLSQPCRA). Intrachain disulfides connect cysteine 36–cysteine 164, cysteine 48–cysteine 177, and cysteine 163–cysteine 168. Positions 64-149 (MTEEAVSSFI…LKSLYLDTLS (86 aa)) are cleaved as a propeptide — connecting peptide. A disordered region spans residues 80-114 (FDTMPNLSEKPKTALPEGHPSLPEQQQYVPVSSDS). The segment covering 102–114 (PEQQQYVPVSSDS) has biased composition (polar residues).

Belongs to the insulin family. In terms of assembly, heterodimer of a B chain and an A chain linked by two disulfide bonds.

The protein localises to the secreted. Relaxin is an ovarian hormone that acts with estrogen to produce dilatation of the birth canal in many mammals. It bears mature young, and allows separation of the pelvic bones. The chain is Prorelaxin (RLN) from Mesocricetus auratus (Golden hamster).